The following is an 81-amino-acid chain: Photosystem I iron-sulfur center (81 aa).

4Fe-4S ferredoxin-type domains lie at 2 to 31 and 39 to 68; these read AHSV…MISW and IASA…VRVY. The [4Fe-4S] cluster site is built by Cys-11, Cys-14, Cys-17, Cys-21, Cys-48, Cys-51, Cys-54, and Cys-58.

In terms of assembly, the eukaryotic PSI reaction center is composed of at least 11 subunits. [4Fe-4S] cluster is required as a cofactor.

It localises to the plastid. It is found in the chloroplast thylakoid membrane. The catalysed reaction is reduced [plastocyanin] + hnu + oxidized [2Fe-2S]-[ferredoxin] = oxidized [plastocyanin] + reduced [2Fe-2S]-[ferredoxin]. Apoprotein for the two 4Fe-4S centers FA and FB of photosystem I (PSI); essential for photochemical activity. FB is the terminal electron acceptor of PSI, donating electrons to ferredoxin. The C-terminus interacts with PsaA/B/D and helps assemble the protein into the PSI complex. Required for binding of PsaD and PsaE to PSI. PSI is a plastocyanin-ferredoxin oxidoreductase, converting photonic excitation into a charge separation, which transfers an electron from the donor P700 chlorophyll pair to the spectroscopically characterized acceptors A0, A1, FX, FA and FB in turn. This is Photosystem I iron-sulfur center (psaC) from Anthoceros angustus (Hornwort).